Consider the following 476-residue polypeptide: Methylenetetrahydrofolate--tRNA-(uracil-5-)-methyltransferase TrmFO (476 aa).

An FAD-binding site is contributed by 14–19; the sequence is GGGLAG. The segment at 428-447 is disordered; sequence LTEPPTHGADGKKLRGPEKS. The segment covering 436 to 447 has biased composition (basic and acidic residues); sequence ADGKKLRGPEKS.

This sequence belongs to the MnmG family. TrmFO subfamily. FAD is required as a cofactor.

The protein localises to the cytoplasm. The enzyme catalyses uridine(54) in tRNA + (6R)-5,10-methylene-5,6,7,8-tetrahydrofolate + NADH + H(+) = 5-methyluridine(54) in tRNA + (6S)-5,6,7,8-tetrahydrofolate + NAD(+). The catalysed reaction is uridine(54) in tRNA + (6R)-5,10-methylene-5,6,7,8-tetrahydrofolate + NADPH + H(+) = 5-methyluridine(54) in tRNA + (6S)-5,6,7,8-tetrahydrofolate + NADP(+). Catalyzes the folate-dependent formation of 5-methyl-uridine at position 54 (M-5-U54) in all tRNAs. This Rhodopseudomonas palustris (strain BisA53) protein is Methylenetetrahydrofolate--tRNA-(uracil-5-)-methyltransferase TrmFO.